Consider the following 171-residue polypeptide: Phosphinothricin N-acetyltransferase (171 aa).

In terms of domain architecture, N-acetyltransferase spans 7–171 (VQVRPGVEED…WDVAWYERPL (165 aa)). Acetyl-CoA contacts are provided by residues 94–96 (VYV), 102–107 (GRGIGS), and Asn-133.

It belongs to the acetyltransferase family. PAT/BAR subfamily.

It carries out the reaction phosphinothricin + acetyl-CoA = N-acetylphosphinothricin + CoA + H(+). Its function is as follows. Inactivates phosphinothricin (PPT) by transfer of an acetyl group from acetyl CoA. The physiological substrate could be a structurally related compound. The chain is Phosphinothricin N-acetyltransferase from Streptomyces coelicolor (strain ATCC BAA-471 / A3(2) / M145).